Consider the following 76-residue polypeptide: Conotoxin Vc6.3 (76 aa).

Positions 1 to 22 (MKLTCVMIVAVLFLTANTFATA) are cleaved as a signal peptide. The propeptide occupies 23-50 (DDPRNGLRDLFSIAHHEMKNPEASKLNE). Intrachain disulfides connect Cys52–Cys66, Cys59–Cys70, and Cys67–Cys75.

This sequence belongs to the conotoxin O1 superfamily. Expressed by the venom duct.

The protein localises to the secreted. This is Conotoxin Vc6.3 from Conus victoriae (Queen Victoria cone).